The sequence spans 284 residues: Phosphatidylserine decarboxylase proenzyme (284 aa).

Residues D88, H145, and S251 each act as charge relay system; for autoendoproteolytic cleavage activity in the active site. S251 (schiff-base intermediate with substrate; via pyruvic acid; for decarboxylase activity) is an active-site residue. Pyruvic acid (Ser); by autocatalysis is present on S251.

The protein belongs to the phosphatidylserine decarboxylase family. PSD-B subfamily. Prokaryotic type I sub-subfamily. Heterodimer of a large membrane-associated beta subunit and a small pyruvoyl-containing alpha subunit. Pyruvate is required as a cofactor. Is synthesized initially as an inactive proenzyme. Formation of the active enzyme involves a self-maturation process in which the active site pyruvoyl group is generated from an internal serine residue via an autocatalytic post-translational modification. Two non-identical subunits are generated from the proenzyme in this reaction, and the pyruvate is formed at the N-terminus of the alpha chain, which is derived from the carboxyl end of the proenzyme. The autoendoproteolytic cleavage occurs by a canonical serine protease mechanism, in which the side chain hydroxyl group of the serine supplies its oxygen atom to form the C-terminus of the beta chain, while the remainder of the serine residue undergoes an oxidative deamination to produce ammonia and the pyruvoyl prosthetic group on the alpha chain. During this reaction, the Ser that is part of the protease active site of the proenzyme becomes the pyruvoyl prosthetic group, which constitutes an essential element of the active site of the mature decarboxylase.

Its subcellular location is the cell membrane. It carries out the reaction a 1,2-diacyl-sn-glycero-3-phospho-L-serine + H(+) = a 1,2-diacyl-sn-glycero-3-phosphoethanolamine + CO2. The protein operates within phospholipid metabolism; phosphatidylethanolamine biosynthesis; phosphatidylethanolamine from CDP-diacylglycerol: step 2/2. Catalyzes the formation of phosphatidylethanolamine (PtdEtn) from phosphatidylserine (PtdSer). The protein is Phosphatidylserine decarboxylase proenzyme of Polaromonas sp. (strain JS666 / ATCC BAA-500).